The sequence spans 321 residues: Lipoyl synthase (321 aa).

7 residues coordinate [4Fe-4S] cluster: C68, C73, C79, C94, C98, C101, and S308. The Radical SAM core domain occupies 80–297 (FNHGTATFMI…KEIALELGFT (218 aa)).

The protein belongs to the radical SAM superfamily. Lipoyl synthase family. It depends on [4Fe-4S] cluster as a cofactor.

Its subcellular location is the cytoplasm. It catalyses the reaction [[Fe-S] cluster scaffold protein carrying a second [4Fe-4S](2+) cluster] + N(6)-octanoyl-L-lysyl-[protein] + 2 oxidized [2Fe-2S]-[ferredoxin] + 2 S-adenosyl-L-methionine + 4 H(+) = [[Fe-S] cluster scaffold protein] + N(6)-[(R)-dihydrolipoyl]-L-lysyl-[protein] + 4 Fe(3+) + 2 hydrogen sulfide + 2 5'-deoxyadenosine + 2 L-methionine + 2 reduced [2Fe-2S]-[ferredoxin]. The protein operates within protein modification; protein lipoylation via endogenous pathway; protein N(6)-(lipoyl)lysine from octanoyl-[acyl-carrier-protein]: step 2/2. Its function is as follows. Catalyzes the radical-mediated insertion of two sulfur atoms into the C-6 and C-8 positions of the octanoyl moiety bound to the lipoyl domains of lipoate-dependent enzymes, thereby converting the octanoylated domains into lipoylated derivatives. The sequence is that of Lipoyl synthase from Vibrio campbellii (strain ATCC BAA-1116).